An 89-amino-acid chain; its full sequence is Small ribosomal subunit protein uS15 (89 aa).

Belongs to the universal ribosomal protein uS15 family. Part of the 30S ribosomal subunit. Forms a bridge to the 50S subunit in the 70S ribosome, contacting the 23S rRNA.

One of the primary rRNA binding proteins, it binds directly to 16S rRNA where it helps nucleate assembly of the platform of the 30S subunit by binding and bridging several RNA helices of the 16S rRNA. Functionally, forms an intersubunit bridge (bridge B4) with the 23S rRNA of the 50S subunit in the ribosome. The protein is Small ribosomal subunit protein uS15 of Shewanella amazonensis (strain ATCC BAA-1098 / SB2B).